A 996-amino-acid chain; its full sequence is MEAAALLSPTATSRSPLPLLSTAPAAHRLHVLLPLSGRRRRLCLRSSPRPRGSLGCAGDCVVRSMGSSRERGVLVKTSSSSASVESATQEVGAASSGEWSGDAIRRRFLDFYAARGHKILPSSSLVPDDPTVFLTIAGMLQFKPIFLGKEPRRVPCATTSQKCIRTNDIENVGRTSRHQTFFEMLGNFSFGDYFKKEAITWAWELTTKEFGLPPERLWISVFQDDDEAFSIWHNEVGVPKERIKRLGEDDNFWTSGATGPCGPCSEIYYDFYPERGSSDADLGDDSRFIEFYNLVFMQYNKKDDGSLEPLKQKNIDTGMGLERMARILQKVPNNYETDLIFPIIEKAASMALVSYTTADDAMKTNLKIIGDHMRAVVYLISDGVIPSNIGRGYVVRRLIRRVVRTGRLIGIRGDGHGNSEGAFLPSLAEVAISLSTEIDPDVESRRKSILGELQREELRFVQTLERGEKLLDELLDEALSSAGNNGGKPCLSGKDVFLLYDTYGFPVEITAEISGERGVIVDMKGFDMEMENQRKQSQAAHNVVKLSVGNETEIVKSIPDTEFLGYDSLSATAVVKGLLVNGNSVNVVSEGSDVEIFLDRTPFYAESGGQVGDNGFLYVYGEEDAKQKAVIEINDVQKSLGNIFVHKGTIKQGSVEVGKEIDAAVDAKLRQGAKAHHTATHLLQSALKSIIGSETSQAGSLVAFDRLRFDFNFHRPLSEEELMKIESLVNQWVSSATHLETKVMDLQDAKNAGAIAMFGEKYGEQVRVVEVPGVSMELCGGTHVSNTAEIRGFKIISEQGIASGVRRIEAVAGDAFVEYVCARDNYMRCLCSSLKVKAEDVNGRVETILEELRTTRNEVSSLRSKIAVLKAASLANKATTIDNTRVVVENMGDVDADGLKSAAEYLVDTLEDPAAVILGSSPGDGKVSLVAAFSPGVVKMGIQAGKFVGGIAKLCGGGGGGKPNFAQAGGRKPENLPGALEKARDEIVAAISSKSS.

Residues His-677, His-681, Cys-779, and His-783 each contribute to the Zn(2+) site.

The protein belongs to the class-II aminoacyl-tRNA synthetase family. As to quaternary structure, monomer. Requires Zn(2+) as cofactor.

Its subcellular location is the plastid. It is found in the chloroplast. The protein localises to the mitochondrion. The catalysed reaction is tRNA(Ala) + L-alanine + ATP = L-alanyl-tRNA(Ala) + AMP + diphosphate. Catalyzes the attachment of alanine to tRNA(Ala) in a two-step reaction: alanine is first activated by ATP to form Ala-AMP and then transferred to the acceptor end of tRNA(Ala). Also edits incorrectly charged tRNA(Ala) via its editing domain. In Oryza sativa subsp. japonica (Rice), this protein is Alanine--tRNA ligase, chloroplastic/mitochondrial.